The following is a 1893-amino-acid chain: MKAMPWNWTCLLSHLLVVGMGSSTLLPRQPPQLSQKPSFVTFRGEPAEGFNHLVVDERTGHIYLGAVNRIYKLSSDLKVLVTHQTGPDEDNPKCYPPRIVQTCNEPLASTNNVNKMLLIDYKENRLIACGSLYQGICKLLRLEDLFKLGEPFHKKEHYLSGVNESGSVFGVIVSYSNFDDKLFIATAVDGKPEYFPTISSRKLTKNSEADGMFAYVFHDEFVASMIKIPSDTFTVIPDFDIYYVYGFSSGNFVYFLTLQPEMVSPPGSTTKEQVYTSKLVRLCKEDTAFNSYVEVPIGCERNGVEYRLLQAAYLSKAGAVLGRTLGVRPDDDLLFTVFSKGQKRKMKSLDESALCIFILKQINDRIKDRLQSCYRGEGTLDLAWLKVKDIPCSSALLTIDDNFCGLDMNAPLGVSEMVRGIPVFTEDRDRMTSVIAYVYKNHSLAFVGTKSGKLKKIRVDGPKGNALQYETVQVVDSGPVLRDMAFSKDHEQLYIMSERQLTRVPVESCGQYRSCGECLGSGDPHCGWCVLHNTCTRKERCERSREPRRFASEMKQCVRLTVHPNNISVSQYNVLLVLETYNVPELSAGVNCTFEDLSEMDGLVIGNQIQCYSPAAKEVPRIITENGDHHVVQLQLKSKETGMTFASTSFVFYNCSVHNSCLSCVESPYRCHWCKYRHVCTHDPNTCSFQEGRVKLPEDCPQLLRVDKILVPVEVIKPITLKAKNLPQPQSGQRGYECILNIQGIEQRVPALRFNSSSVQCQNTSYSYEGMEINNLPVELTVVWNGHFNIDNPAQNKVYLYKCGAMRESCGLCLKADPDFECGWCQSPGQCTLRQHCPAHESRWLELSGANSKCTNPRITEIIPVTGPREGGTKVTIRGENLGLEFRDIASHVKVAGVECSPLVDGYIPAEQIVCEMGEAKPSQHAGFVEICVAVCRPEFMARSSQLYYFMTLTLADLKPNRGPMSGGTQVTITGTNLNAGSNVVVMFGSQPCLFHRRSPSYIICNTTSSEEVLDMKVTVQVDRARIRQDLVFQYVEDPTIVRIEPEWSIVSGNTPIAVWGTHLDLIQNPQIRAKHGGKEHINICEVLNATEMTCQAPALALGPDHQSDLTERPEEFGFILDNVQSLLILNKTNFTYYPNPVFEAFSPSGILELKPGTPIILKGKNLIPPVAGGNVKLNYTVLVGEKPCTVTVSDVQLLCESPNLIGRHKVMARVGGMEYSPGMVYIAPDSPLSLPAIVSIAVAGGLLIIFIVAVLIAYKRKSRESDLTLKRLQMQMDNLESRVALECKEAFAELQTDIHELTSDLDGAGIPFLDYRTYTMRVLFPGIEDHPVLRDLEVPGYRQERVEKGLKLFAQLINNKVFLLSFIRTLESQRSFSMRDRGNVASLIMTVLQSKLEYATDVLKQLLADLIDKNLESKNHPKLLLRRTESVAEKMLTNWFTFLLYKFLKECAGEPLFSLFCAIKQQMEKGPIDAITGEARYSLSEDKLIRQQIEYKTLVLSCVSPDNVNSPEVPVKILNCDTITQVKEKILDAIFKNVPCSHRPKAADMDLEWRQGSGARMILQDEDITTKIENDWKRLNTVAHYQVPDGSVVALVSKQVTAYNAVNNSTVSRTSASKYENMIRYTGSPDSLRSRTPMITPDLESGVKLWHLVKNHEHGDQKEGDRGSKMVSEIYLTRLLATKGTLQKFVDDLFETIFSTAHRGSALPLAIKYMFDFLDEQADKHGIHDPHVRHTWKSNCLPLRFWVNMIKNPQFVFDIHKNSITDACLSVVAQTFMDSCSTSEHRLGKDSPSNKLLYAKDIPSYKNWVERYYSDIGKMPAISDQDMNAYLAEQSRMHMNEFNTMSALSEIFSYVGKYSEEILGPLDHDDQCGKQKLAYKLEQVITLMSLDS.

Positions 1-23 (MKAMPWNWTCLLSHLLVVGMGSS) are cleaved as a signal peptide. One can recognise a Sema domain in the interval 24 to 506 (TLLPRQPPQL…SERQLTRVPV (483 aa)). Topologically, residues 24–1236 (TLLPRQPPQL…IAPDSPLSLP (1213 aa)) are extracellular. Disulfide bonds link Cys94/Cys103, Cys129/Cys137, Cys283/Cys404, Cys299/Cys355, Cys373/Cys392, Cys509/Cys526, Cys515/Cys557, Cys518/Cys535, Cys529/Cys541, and Cys592/Cys611. Residues 508–558 (SCGQYRSCGECLGSGDPHCGWCVLHNTCTRKERCERSREPRRFASEMKQCV) enclose the PSI 1 domain. Asn654 carries N-linked (GlcNAc...) asparagine glycosylation. PSI domains are found at residues 654–701 (NCSV…EDCP) and 802–855 (KCGA…SKCT). IPT/TIG domains lie at 857–951 (PRIT…YYFM), 953–1036 (LTLA…FQYV), 1039–1138 (PTIV…FTYY), and 1141–1229 (PVFE…YIAP). Residues Asn1006, Asn1131, and Asn1179 are each glycosylated (N-linked (GlcNAc...) asparagine). Residues 1237-1257 (AIVSIAVAGGLLIIFIVAVLI) traverse the membrane as a helical segment. Topologically, residues 1258–1893 (AYKRKSRESD…QVITLMSLDS (636 aa)) are cytoplasmic. Lys1349 is modified (N6-acetyllysine).

The protein belongs to the plexin family. Interacts with NRP1 and NRP2. In terms of tissue distribution, expressed in the developing nervous system. Widely expressed in both the central and peripheral nervous systems. Expressed in the peripheral ganglia, somatosensory, olfactory, visual, auditory and equilibrium systems.

The protein resides in the cell membrane. Functionally, coreceptor for SEMA3A. Necessary for signaling by class 3 semaphorins and subsequent remodeling of the cytoskeleton. Plays a role in axon guidance in the developing nervous system. Class 3 semaphorins bind to a complex composed of a neuropilin and a plexin. The plexin modulates the affinity of the complex for specific semaphorins, and its cytoplasmic domain is required for the activation of down-stream signaling events in the cytoplasm. The polypeptide is Plexin-A4 (Plxna4) (Mus musculus (Mouse)).